The primary structure comprises 309 residues: tRNA-cytidine(32) 2-sulfurtransferase (309 aa).

The PP-loop motif signature appears at 57–62 (SGGKDS). [4Fe-4S] cluster is bound by residues cysteine 132, cysteine 135, and cysteine 223.

This sequence belongs to the TtcA family. As to quaternary structure, homodimer. It depends on Mg(2+) as a cofactor. The cofactor is [4Fe-4S] cluster.

The protein localises to the cytoplasm. It catalyses the reaction cytidine(32) in tRNA + S-sulfanyl-L-cysteinyl-[cysteine desulfurase] + AH2 + ATP = 2-thiocytidine(32) in tRNA + L-cysteinyl-[cysteine desulfurase] + A + AMP + diphosphate + H(+). It functions in the pathway tRNA modification. Its function is as follows. Catalyzes the ATP-dependent 2-thiolation of cytidine in position 32 of tRNA, to form 2-thiocytidine (s(2)C32). The sulfur atoms are provided by the cysteine/cysteine desulfurase (IscS) system. In Variovorax paradoxus (strain S110), this protein is tRNA-cytidine(32) 2-sulfurtransferase.